The sequence spans 662 residues: Mitochondrial Rho GTPase 1 (662 aa).

Residues 1–634 (MTKETIRVVI…AKDVDYRQTA (634 aa)) lie on the Cytoplasmic side of the membrane. The 183-residue stretch at 3 to 185 (KETIRVVICG…FYLCQRAITH (183 aa)) folds into the Miro 1 domain. GTP is bound by residues 12-19 (GDEGVGKS), 62-64 (DTS), and 116-119 (NKCD). 2 consecutive EF-hand domains span residues 201 to 236 (LAVM…CFNK) and 330 to 365 (KGYR…TPGL). Residues Asp-214, Asn-216, Asp-218, Tyr-220, Glu-225, Asp-343, Asp-345, Asp-347, and Glu-354 each coordinate Ca(2+). One can recognise a Miro 2 domain in the interval 446 to 611 (RKVFNCFVIG…FIKITEAALD (166 aa)). GTP is bound by residues 455–462 (GKPCCGKS), 491–495 (ELKGG), and 560–563 (SKAD). Residues 635 to 655 (LIFGSTVGFVALCSFTLMKLF) traverse the membrane as a helical; Anchor for type IV membrane protein segment. Over 656 to 662 (KSSKFSK) the chain is Mitochondrial intermembrane.

It belongs to the mitochondrial Rho GTPase family.

The protein localises to the mitochondrion outer membrane. Mitochondrial GTPase involved in mitochondrial trafficking. Probably involved in control of anterograde transport of mitochondria and their subcellular distribution. In Saccharomyces cerevisiae (strain ATCC 204508 / S288c) (Baker's yeast), this protein is Mitochondrial Rho GTPase 1 (GEM1).